Consider the following 294-residue polypeptide: MFQGSIVALITPFKEGEVDYEALGNLIEFHVDNGTDAILVCGTTGESPTLTFEEHEKVIEFAVKRAAGRIKVIAGTGGNATHEAVHLTAHAKEVGADGALVVVPYYNKPTQRGLYEHFKTVAQEVDIPIIIYNIPSRTCVEISVDTMFKLASECENIVASKESTPNMDRISEIVKRLGESFSVLSGDDSLTLPMMALGAKGVISVANNVMPREVKELIRAALEGDFRRAREIHYYLHDLFKVLFIETNPIPVKTACWMLGMCEKEFRLPLTEMSPENENKLREVLKKYNLPLKN.

Thr44 serves as a coordination point for pyruvate. Tyr132 serves as the catalytic Proton donor/acceptor. The active-site Schiff-base intermediate with substrate is Lys161. Ile203 contributes to the pyruvate binding site.

This sequence belongs to the DapA family. As to quaternary structure, homotetramer; dimer of dimers.

The protein resides in the cytoplasm. It carries out the reaction L-aspartate 4-semialdehyde + pyruvate = (2S,4S)-4-hydroxy-2,3,4,5-tetrahydrodipicolinate + H2O + H(+). The protein operates within amino-acid biosynthesis; L-lysine biosynthesis via DAP pathway; (S)-tetrahydrodipicolinate from L-aspartate: step 3/4. Its function is as follows. Catalyzes the condensation of (S)-aspartate-beta-semialdehyde [(S)-ASA] and pyruvate to 4-hydroxy-tetrahydrodipicolinate (HTPA). The polypeptide is 4-hydroxy-tetrahydrodipicolinate synthase (Aquifex aeolicus (strain VF5)).